The following is a 133-amino-acid chain: Nickel-responsive regulator (133 aa).

4 residues coordinate Ni(2+): H76, H87, H89, and C95.

It belongs to the transcriptional regulatory CopG/NikR family. As to quaternary structure, homotetramer. Ni(2+) serves as cofactor.

Transcriptional repressor of the nikABCDE operon. Is active in the presence of excessive concentrations of intracellular nickel. In Shigella dysenteriae serotype 1 (strain Sd197), this protein is Nickel-responsive regulator.